The primary structure comprises 382 residues: MNSEFMDALTTLEKEKGISKEVIIEAIEAALISGYKRNFNQAQNVRVDVNRENGSIRVFARKEVVEEVFDARLEISLDEAKGINPNYEVDDVVEIEVTPKDFGRIAAQTAKQVVTQRVREAERGIIYADFIDREEDIMTGIVQRQDNRFIYVDLGKVEALLPLSEQMPNESYRHNDRIKAYITKVEKTTKGPQIMISRTHPGLLKRLFELEVPEIYDGTVELKSVAREAGDRSKISVHAENPEVDPVGACVGPKGSRVQTIVNELKGEKIDIVRWSEDPVEYVANALSPSKVVKVNVNEEEKTTQVIVPDYQLSLAIGKRGQNARLAAKLTGWKIDIKSESEAQELGLLEDEAASHETLALDQETADQPEATVETSKNHEEE.

In terms of domain architecture, S1 motif spans 135–199 (EDIMTGIVQR…KGPQIMISRT (65 aa)). In terms of domain architecture, KH spans 301–367 (EKTTQVIVPD…TLALDQETAD (67 aa)). The tract at residues 348 to 382 (LLEDEAASHETLALDQETADQPEATVETSKNHEEE) is disordered.

The protein belongs to the NusA family. As to quaternary structure, monomer. Binds directly to the core enzyme of the DNA-dependent RNA polymerase and to nascent RNA.

Its subcellular location is the cytoplasm. Its function is as follows. Participates in both transcription termination and antitermination. This Halalkalibacterium halodurans (strain ATCC BAA-125 / DSM 18197 / FERM 7344 / JCM 9153 / C-125) (Bacillus halodurans) protein is Transcription termination/antitermination protein NusA.